The chain runs to 220 residues: Fructose-6-phosphate aldolase (220 aa).

Lys85 serves as the catalytic Schiff-base intermediate with substrate.

Belongs to the transaldolase family. Type 3A subfamily. Homodecamer.

The protein resides in the cytoplasm. The catalysed reaction is beta-D-fructose 6-phosphate = dihydroxyacetone + D-glyceraldehyde 3-phosphate. Its function is as follows. Catalyzes the reversible formation of fructose 6-phosphate from dihydroxyacetone and D-glyceraldehyde 3-phosphate via an aldolization reaction. In Salmonella schwarzengrund (strain CVM19633), this protein is Fructose-6-phosphate aldolase.